A 378-amino-acid chain; its full sequence is Heterogeneous nuclear ribonucleoprotein A3 (378 aa).

An N-acetylmethionine modification is found at methionine 1. Positions 1–10 (MEVKPPPGRP) are enriched in pro residues. The tract at residues 1–34 (MEVKPPPGRPQPDSGRRRRRRGEEGHDPKEPEQL) is disordered. Lysine 4 is covalently cross-linked (Glycyl lysine isopeptide (Lys-Gly) (interchain with G-Cter in SUMO2)). Serine 14 is subject to Phosphoserine. The segment covering 21–34 (RGEEGHDPKEPEQL) has biased composition (basic and acidic residues). The region spanning 35–118 (RKLFIGGLSF…RAVSREDSVK (84 aa)) is the RRM 1 domain. A Glycyl lysine isopeptide (Lys-Gly) (interchain with G-Cter in SUMO2) cross-link involves residue lysine 36. At serine 43 the chain carries Phosphoserine. At arginine 52 the chain carries Dimethylated arginine; alternate. The residue at position 52 (arginine 52) is an Omega-N-methylarginine; alternate. Arginine 76 carries the omega-N-methylarginine modification. 2 positions are modified to phosphoserine: serine 112 and serine 116. Residue lysine 118 forms a Glycyl lysine isopeptide (Lys-Gly) (interchain with G-Cter in SUMO2) linkage. Threonine 124 is modified (phosphothreonine). Residues 126-205 (KKIFVGGIKE…CEVKKALSKQ (80 aa)) enclose the RRM 2 domain. Lysine 134 bears the N6-acetyllysine; alternate mark. A Glycyl lysine isopeptide (Lys-Gly) (interchain with G-Cter in SUMO2); alternate cross-link involves residue lysine 134. Glycyl lysine isopeptide (Lys-Gly) (interchain with G-Cter in SUMO2) cross-links involve residues lysine 151 and lysine 182. The segment at 204–225 (KQEMQSAGSQRGRGGGSGNFMG) is disordered. An omega-N-methylarginine; alternate mark is found at arginine 214, arginine 216, arginine 226, arginine 239, and arginine 246. Residues arginine 214, arginine 216, arginine 226, arginine 239, and arginine 246 each carry the asymmetric dimethylarginine; alternate modification. Residues 214 to 225 (RGRGGGSGNFMG) are compositionally biased toward gly residues. Arginine 257 carries the post-translational modification Omega-N-methylarginine. Position 286 is an asymmetric dimethylarginine (arginine 286). Residues 336-378 (SGQQQSNYGPMKGGSFGGRSSGSPYGGGYGSGGGSGGYGSRRF) are disordered. Positions 346–378 (MKGGSFGGRSSGSPYGGGYGSGGGSGGYGSRRF) are enriched in gly residues. Serine 350 is modified (phosphoserine). Position 354 is an omega-N-methylarginine (arginine 354). Serine 358 bears the Phosphoserine mark. A phosphotyrosine mark is found at tyrosine 360 and tyrosine 364. Phosphoserine occurs at positions 366 and 370. Position 373 is a phosphotyrosine (tyrosine 373). Serine 375 bears the Phosphoserine mark.

In terms of assembly, identified in the spliceosome C complex.

Its subcellular location is the nucleus. Plays a role in cytoplasmic trafficking of RNA. Binds to the cis-acting response element, A2RE. May be involved in pre-mRNA splicing. In Homo sapiens (Human), this protein is Heterogeneous nuclear ribonucleoprotein A3 (HNRNPA3).